Consider the following 88-residue polypeptide: Small ribosomal subunit protein uS17 (88 aa).

The protein belongs to the universal ribosomal protein uS17 family. In terms of assembly, part of the 30S ribosomal subunit.

In terms of biological role, one of the primary rRNA binding proteins, it binds specifically to the 5'-end of 16S ribosomal RNA. In Pseudomonas aeruginosa (strain LESB58), this protein is Small ribosomal subunit protein uS17.